A 162-amino-acid chain; its full sequence is SsrA-binding protein (162 aa).

The tract at residues 140–162 is disordered; sequence DKRETAAKRDWSRQKSRLMKDHG.

This sequence belongs to the SmpB family.

It is found in the cytoplasm. In terms of biological role, required for rescue of stalled ribosomes mediated by trans-translation. Binds to transfer-messenger RNA (tmRNA), required for stable association of tmRNA with ribosomes. tmRNA and SmpB together mimic tRNA shape, replacing the anticodon stem-loop with SmpB. tmRNA is encoded by the ssrA gene; the 2 termini fold to resemble tRNA(Ala) and it encodes a 'tag peptide', a short internal open reading frame. During trans-translation Ala-aminoacylated tmRNA acts like a tRNA, entering the A-site of stalled ribosomes, displacing the stalled mRNA. The ribosome then switches to translate the ORF on the tmRNA; the nascent peptide is terminated with the 'tag peptide' encoded by the tmRNA and targeted for degradation. The ribosome is freed to recommence translation, which seems to be the essential function of trans-translation. In Roseobacter denitrificans (strain ATCC 33942 / OCh 114) (Erythrobacter sp. (strain OCh 114)), this protein is SsrA-binding protein.